A 267-amino-acid polypeptide reads, in one-letter code: MNKKNIKTTSSVSLDNVSIRYGNSVAVKNVFCDIEKNQVTSFIGPSGCGKSTVIRAINRMNDLIEGCKLSGSVIFEGIDIYAEDIDPVEVRRRIGMVFQQPNPFPKSIYENIAFGARVNGYKGNMDQLVEESLTKAAVWDECKDKLNESGYSLSGGQQQRLCIARTIAIEPDVILMDEPCSALDPLSTLKIEETIHELKKNFTIIIVTHNMQQANRVSDYTAFFNTEKKDKDLGGKIGFLVEFDKTKNMFNSPKQKSTQDYISGKFG.

The ABC transporter domain occupies 12 to 251; that stretch reads VSLDNVSIRY…EFDKTKNMFN (240 aa). ATP is bound at residue 44-51; sequence GPSGCGKS.

It belongs to the ABC transporter superfamily. Phosphate importer (TC 3.A.1.7) family. The complex is composed of two ATP-binding proteins (PstB), two transmembrane proteins (PstC and PstA) and a solute-binding protein (PstS).

Its subcellular location is the cell inner membrane. It catalyses the reaction phosphate(out) + ATP + H2O = ADP + 2 phosphate(in) + H(+). In terms of biological role, part of the ABC transporter complex PstSACB involved in phosphate import. Responsible for energy coupling to the transport system. The chain is Phosphate import ATP-binding protein PstB from Prochlorococcus marinus (strain NATL2A).